Consider the following 198-residue polypeptide: HTH-type transcriptional regulator BetI (198 aa).

Residues 8 to 68 enclose the HTH tetR-type domain; that stretch reads PLRRRELIDA…ATMRHLLREL (61 aa). The segment at residues 31 to 50 is a DNA-binding region (H-T-H motif); it reads TVAQIAHEAGVSPALAHHYF.

The protein operates within amine and polyamine biosynthesis; betaine biosynthesis via choline pathway [regulation]. In terms of biological role, repressor involved in the biosynthesis of the osmoprotectant glycine betaine. It represses transcription of the choline transporter BetT and the genes of BetAB involved in the synthesis of glycine betaine. The polypeptide is HTH-type transcriptional regulator BetI (Brucella canis (strain ATCC 23365 / NCTC 10854 / RM-666)).